A 431-amino-acid polypeptide reads, in one-letter code: Putative serine/threonine-protein kinase B (431 aa).

The Protein kinase domain maps to 20–279 (YLNKGIVGLG…VRENFQIPYI (260 aa)). ATP-binding positions include 26–34 (VGLGSYGEG) and Lys49. Asp147 acts as the Proton acceptor in catalysis. A PH domain is found at 331–429 (DVTHRGHVNK…WVHAIQRGIG (99 aa)).

The protein belongs to the protein kinase superfamily. Ser/Thr protein kinase family.

The catalysed reaction is L-seryl-[protein] + ATP = O-phospho-L-seryl-[protein] + ADP + H(+). It catalyses the reaction L-threonyl-[protein] + ATP = O-phospho-L-threonyl-[protein] + ADP + H(+). The sequence is that of Putative serine/threonine-protein kinase B (NRKB) from Trypanosoma brucei brucei.